Consider the following 335-residue polypeptide: Pyridoxal 5'-phosphate synthase subunit PdxS (335 aa).

Asp-30 contributes to the D-ribose 5-phosphate binding site. Residue Lys-87 is the Schiff-base intermediate with D-ribose 5-phosphate of the active site. Gly-159 lines the D-ribose 5-phosphate pocket. Arg-171 contributes to the D-glyceraldehyde 3-phosphate binding site. D-ribose 5-phosphate-binding positions include Gly-257 and 278–279 (GS).

This sequence belongs to the PdxS/SNZ family. As to quaternary structure, in the presence of PdxT, forms a dodecamer of heterodimers.

The enzyme catalyses aldehydo-D-ribose 5-phosphate + D-glyceraldehyde 3-phosphate + L-glutamine = pyridoxal 5'-phosphate + L-glutamate + phosphate + 3 H2O + H(+). It participates in cofactor biosynthesis; pyridoxal 5'-phosphate biosynthesis. Functionally, catalyzes the formation of pyridoxal 5'-phosphate from ribose 5-phosphate (RBP), glyceraldehyde 3-phosphate (G3P) and ammonia. The ammonia is provided by the PdxT subunit. Can also use ribulose 5-phosphate and dihydroxyacetone phosphate as substrates, resulting from enzyme-catalyzed isomerization of RBP and G3P, respectively. The protein is Pyridoxal 5'-phosphate synthase subunit PdxS of Thermococcus gammatolerans (strain DSM 15229 / JCM 11827 / EJ3).